A 176-amino-acid polypeptide reads, in one-letter code: Ribosome maturation factor RimM (176 aa).

A PRC barrel domain is found at 101–170 (EGEYFESDLI…RITVELPEGL (70 aa)).

Belongs to the RimM family. As to quaternary structure, binds ribosomal protein uS19.

It is found in the cytoplasm. In terms of biological role, an accessory protein needed during the final step in the assembly of 30S ribosomal subunit, possibly for assembly of the head region. Essential for efficient processing of 16S rRNA. May be needed both before and after RbfA during the maturation of 16S rRNA. It has affinity for free ribosomal 30S subunits but not for 70S ribosomes. The chain is Ribosome maturation factor RimM from Solibacter usitatus (strain Ellin6076).